The primary structure comprises 121 residues: Small ribosomal subunit protein uS13 (121 aa).

Positions 94–121 (SLPVRGQNTKNNSRTRKGPRRTVANKKK) are disordered. The segment covering 106–121 (SRTRKGPRRTVANKKK) has biased composition (basic residues).

The protein belongs to the universal ribosomal protein uS13 family. Part of the 30S ribosomal subunit. Forms a loose heterodimer with protein S19. Forms two bridges to the 50S subunit in the 70S ribosome.

Located at the top of the head of the 30S subunit, it contacts several helices of the 16S rRNA. In the 70S ribosome it contacts the 23S rRNA (bridge B1a) and protein L5 of the 50S subunit (bridge B1b), connecting the 2 subunits; these bridges are implicated in subunit movement. Contacts the tRNAs in the A and P-sites. The polypeptide is Small ribosomal subunit protein uS13 (Exiguobacterium sp. (strain ATCC BAA-1283 / AT1b)).